The sequence spans 271 residues: uncharacterized protein (271 aa).

One can recognise an AB hydrolase-1 domain in the interval 24-124; that stretch reads PIILLVHGGG…QVHVMIPHEP (101 aa).

The protein belongs to the AB hydrolase superfamily.

This is an uncharacterized protein from Bacillus subtilis (strain 168).